A 499-amino-acid polypeptide reads, in one-letter code: MSIIDTRTPDSKHFISGVTGDWEVIIGMEVHAQIISNSKLFSGASAKFGAEPNNHVSLIDAAMPGMLPVLNEECVRQAVRTGLGLKARINLKSVFDRKNYFYPDLPQGYQISQFHYPIVGEGKIIISVGPDSNGQFEDIEVGIERLHLEQDAGKSMHDQHPTMSFVDLNRSGVALMEIVSKPDMRSSDEAKAYMTKLRTIVRYLGTCDGNMDEGSMRADVNVSVRRPGEDFGTRCEIKNVNSIRFIGQAIEYEARRQIAILEDGGVIEQETRLFDATKGETRSMRSKEEAHDYRYFPDPDLLPLEFDQAFVDSLAADLPELPDAIKARFVKEMGLTVYDASILVTEKAIADYFEEVAYGRDGKIVANWVINDLLGALNKDNREIEESPVSPNQLGSIIDLIKEGTISGKIAKDLFEIVWNEGGDPRQIVEERSMKQVTDTKAIERAVDEIVANNADKVAQAKQKPALAGWFVGQVMKATGGKANPQTVNELVKMKLGID.

The protein belongs to the GatB/GatE family. GatB subfamily. As to quaternary structure, heterotrimer of A, B and C subunits.

It carries out the reaction L-glutamyl-tRNA(Gln) + L-glutamine + ATP + H2O = L-glutaminyl-tRNA(Gln) + L-glutamate + ADP + phosphate + H(+). The catalysed reaction is L-aspartyl-tRNA(Asn) + L-glutamine + ATP + H2O = L-asparaginyl-tRNA(Asn) + L-glutamate + ADP + phosphate + 2 H(+). Allows the formation of correctly charged Asn-tRNA(Asn) or Gln-tRNA(Gln) through the transamidation of misacylated Asp-tRNA(Asn) or Glu-tRNA(Gln) in organisms which lack either or both of asparaginyl-tRNA or glutaminyl-tRNA synthetases. The reaction takes place in the presence of glutamine and ATP through an activated phospho-Asp-tRNA(Asn) or phospho-Glu-tRNA(Gln). This is Aspartyl/glutamyl-tRNA(Asn/Gln) amidotransferase subunit B from Bartonella tribocorum (strain CIP 105476 / IBS 506).